The following is a 205-amino-acid chain: Transcriptional regulator GfcR (205 aa).

Belongs to the purine/pyrimidine phosphoribosyltransferase family. GfcR subfamily.

The sequence is that of Transcriptional regulator GfcR from Methanococcus maripaludis (strain C5 / ATCC BAA-1333).